A 354-amino-acid chain; its full sequence is Arginase-2, mitochondrial (354 aa).

The transit peptide at 1–22 directs the protein to the mitochondrion; sequence MSLRSHLSRLLRTQVHSVRKKS. The Mn(2+) site is built by H120, D143, H145, and D147. Substrate contacts are provided by residues 145–149, 156–158, and D202; these read HADIN and SGN. D251 and D253 together coordinate Mn(2+). Substrate contacts are provided by T265 and E296. Positions 332–354 are disordered; the sequence is IVYDQLPTPSSPDESESEERVRI.

Belongs to the arginase family. In terms of assembly, homotrimer. Requires Mn(2+) as cofactor.

Its subcellular location is the mitochondrion. The catalysed reaction is L-arginine + H2O = urea + L-ornithine. The protein operates within nitrogen metabolism; urea cycle; L-ornithine and urea from L-arginine: step 1/1. In terms of biological role, may play a role in the regulation of extra-urea cycle arginine metabolism and also in down-regulation of nitric oxide synthesis. Extrahepatic arginase functions to regulate L-arginine bioavailability to nitric oxid synthase (NOS). Arginine metabolism is a critical regulator of innate and adaptive immune responses. Seems to be involved in negative regulation of the survival capacity of activated T cells. May suppress inflammation-related signaling in asthmatic airway epithelium. May play a role in promoting prenatal immune suppression. Regulates RPS6KB1 signaling, which promotes endothelial cell senescence and inflammation and implicates NOS3/eNOS dysfunction. Can inhibit endothelial autophagy independently of its enzymatic activity implicating mTORC2 signaling. Involved in vascular smooth muscle cell senescence and apoptosis independently of its enzymatic activity. This chain is Arginase-2, mitochondrial (ARG2), found in Bos taurus (Bovine).